We begin with the raw amino-acid sequence, 1975 residues long: Cadherin-87A (1975 aa).

Residues 1 to 17 form the signal peptide; sequence MKLPLGLLMICLGLTLA. The Extracellular segment spans residues 18 to 1775; that stretch reads KGETNLPPVF…AIVQDEFDLA (1758 aa). 14 consecutive Cadherin domains span residues 28 to 132, 133 to 245, 246 to 358, 359 to 472, 473 to 669, 670 to 774, 775 to 878, 879 to 998, 999 to 1103, 1104 to 1211, 1212 to 1318, 1319 to 1431, 1432 to 1553, and 1554 to 1677; these read TQTL…PPEF, QNTP…PPVF, QGSL…PPVF, NHKE…KPVF, EQES…PPVC, ESPL…VPNF, EQQS…DPYF, VPAT…PPRF, NAPW…DPKF, SQSD…APVF, TRDV…KPEF, VIPA…RPEF, PDAS…PPVF, and EKPI…PPEE. Residues asparagine 39, asparagine 77, and asparagine 203 are each glycosylated (N-linked (GlcNAc...) asparagine). N-linked (GlcNAc...) asparagine glycosylation occurs at asparagine 424. The tract at residues 535–560 is disordered; it reads CHDNGESNRRERRDLNEDEHVEEDDG. Basic and acidic residues predominate over residues 537-549; sequence DNGESNRRERRDL. Residues 550–560 are compositionally biased toward acidic residues; the sequence is NEDEHVEEDDG. N-linked (GlcNAc...) asparagine glycans are attached at residues asparagine 730 and asparagine 761. 10 N-linked (GlcNAc...) asparagine glycosylation sites follow: asparagine 1039, asparagine 1049, asparagine 1111, asparagine 1163, asparagine 1217, asparagine 1325, asparagine 1349, asparagine 1492, asparagine 1576, and asparagine 1691. Residues 1776-1796 form a helical membrane-spanning segment; the sequence is VAGLVALVIVLFVGVISFIVL. Over 1797 to 1975 the chain is Cytoplasmic; sequence CCCLKHWNLS…DGDDAVAELI (179 aa). The segment covering 1887–1899 has biased composition (polar residues); sequence YATIQPRNNQNRL. The segment at 1887–1916 is disordered; it reads YATIQPRNNQNRLTGGGGAGGGSMRSGGGA. The segment covering 1900-1916 has biased composition (gly residues); it reads TGGGGAGGGSMRSGGGA.

The protein localises to the cell membrane. Cadherins are calcium-dependent cell adhesion proteins. They preferentially interact with themselves in a homophilic manner in connecting cells. This chain is Cadherin-87A (Cad87A), found in Drosophila melanogaster (Fruit fly).